Here is a 271-residue protein sequence, read N- to C-terminus: Large ribosomal subunit protein uL2cz/uL2cy (271 aa).

Disordered regions lie at residues 1-22 (MAKH…DRQV) and 223-271 (PVDH…RRRK).

The protein belongs to the universal ribosomal protein uL2 family. As to quaternary structure, part of the 50S ribosomal subunit.

It is found in the plastid. Its subcellular location is the chloroplast. In Sorghum bicolor (Sorghum), this protein is Large ribosomal subunit protein uL2cz/uL2cy (rpl2-A).